The following is a 60-amino-acid chain: Myrmicitoxin(1)-Pr4b (60 aa).

The N-terminal stretch at 1–23 (MKAIIFLFAVLTVVAIIIPIISG) is a signal peptide. A propeptide spanning residues 24–33 (EPNAGPHAAS) is cleaved from the precursor. At Gln-59 the chain carries Glutamine amide.

The protein belongs to the formicidae venom clade 2 family. Expressed by the venom gland.

The protein localises to the secreted. Its function is as follows. Toxin that causes a rapid and irreversible paralysis when intrathoracically injected into insects (blowflies). Does not cause spontaneous nocifensive behaviors by intraplantar injection in mice. The polypeptide is Myrmicitoxin(1)-Pr4b (Pogonomyrmex rugosus (Desert harvester ant)).